Reading from the N-terminus, the 269-residue chain is Gene 69 protein (269 aa).

This Mycobacterium (Mycobacteriophage D29) protein is Gene 69 protein (69).